We begin with the raw amino-acid sequence, 66 residues long: Large ribosomal subunit protein bL33c (66 aa).

It belongs to the bacterial ribosomal protein bL33 family.

The protein resides in the plastid. It localises to the chloroplast. This is Large ribosomal subunit protein bL33c from Cryptomeria japonica (Japanese cedar).